The sequence spans 490 residues: Katanin p60 ATPase-containing subunit A-like 1 (490 aa).

The residue at position 1 (Met-1) is an N-acetylmethionine. The interval 96–182 (PAVWPPPVPA…ASDGEIPKFD (87 aa)) is disordered. Residues 116 to 127 (PNREVRPLRKEM) are compositionally biased toward basic and acidic residues. Residues 128–139 (AGVGARGPVGRA) are compositionally biased toward low complexity. The segment covering 143 to 169 (SKSEKPSASRDKDCRARGRDDKGRKNM) has biased composition (basic and acidic residues). Ser-174 bears the Phosphoserine mark. 248 to 255 (GPPGTGKT) is an ATP binding site.

This sequence belongs to the AAA ATPase family. Katanin p60 subunit A1 subfamily. A-like 1 sub-subfamily. Interacts with KATNB1 and KATNBL1.

Its subcellular location is the cytoplasm. The protein resides in the cytoskeleton. It localises to the spindle pole. The protein localises to the spindle. The catalysed reaction is n ATP + n H2O + a microtubule = n ADP + n phosphate + (n+1) alpha/beta tubulin heterodimers.. Regulates microtubule dynamics in Sertoli cells, a process that is essential for spermiogenesis and male fertility. Severs microtubules in an ATP-dependent manner, promoting rapid reorganization of cellular microtubule arrays. Has microtubule-severing activity in vitro. This Oryctolagus cuniculus (Rabbit) protein is Katanin p60 ATPase-containing subunit A-like 1.